Reading from the N-terminus, the 102-residue chain is Small ribosomal subunit protein uS10 (102 aa).

It belongs to the universal ribosomal protein uS10 family. Part of the 30S ribosomal subunit.

Its function is as follows. Involved in the binding of tRNA to the ribosomes. The protein is Small ribosomal subunit protein uS10 of Allorhizobium ampelinum (strain ATCC BAA-846 / DSM 112012 / S4) (Agrobacterium vitis (strain S4)).